A 967-amino-acid polypeptide reads, in one-letter code: Alanine--tRNA ligase, cytoplasmic (967 aa).

Positions 605, 609, 724, and 728 each coordinate Zn(2+).

It belongs to the class-II aminoacyl-tRNA synthetase family. As to quaternary structure, monomer. It depends on Zn(2+) as a cofactor. The N-terminus is blocked.

Its subcellular location is the cytoplasm. It carries out the reaction tRNA(Ala) + L-alanine + ATP = L-alanyl-tRNA(Ala) + AMP + diphosphate. Catalyzes the attachment of alanine to tRNA(Ala) in a two-step reaction: alanine is first activated by ATP to form Ala-AMP and then transferred to the acceptor end of tRNA(Ala). Also edits incorrectly charged tRNA(Ala) via its editing domain. The protein is Alanine--tRNA ligase, cytoplasmic of Bombyx mori (Silk moth).